A 499-amino-acid chain; its full sequence is Potassium voltage-gated channel subfamily A member 2 (499 aa).

The tract at residues methionine 1–glutamate 26 is disordered. Residues methionine 1 to methionine 125 form a tetramerization domain region. The Cytoplasmic segment spans residues methionine 1–glycine 160. Residues proline 161 to leucine 182 traverse the membrane as a helical segment. Over glutamate 183 to proline 221 the chain is Extracellular. Asparagine 207 carries an N-linked (GlcNAc...) asparagine glycan. A helical membrane pass occupies residues phenylalanine 222–alanine 243. A lipid anchor (S-palmitoyl cysteine) is attached at cysteine 244. Over cysteine 244 to isoleucine 254 the chain is Cytoplasmic. A helical transmembrane segment spans residues methionine 255–alanine 275. Residues glutamate 276 to serine 289 lie on the Extracellular side of the membrane. A helical; Voltage-sensor membrane pass occupies residues leucine 290–histidine 310. Topologically, residues serine 311–methionine 325 are cytoplasmic. Positions lysine 312 to methionine 325 are S4-S5 linker. A helical transmembrane segment spans residues arginine 326 to tyrosine 347. Residues phenylalanine 348–isoleucine 361 lie on the Extracellular side of the membrane. Residues proline 362–threonine 373 constitute an intramembrane region (helical). Residues threonine 374–aspartate 379 carry the Selectivity filter motif. Residues threonine 374–valine 381 lie within the membrane without spanning it. The Extracellular portion of the chain corresponds to proline 382–lysine 388. Residues isoleucine 389 to tyrosine 417 form a helical membrane-spanning segment. The Cytoplasmic portion of the chain corresponds to histidine 418 to valine 499. Tyrosine 429 carries the phosphotyrosine modification. Phosphoserine occurs at positions 434, 440, 441, and 449. Tyrosine 458 carries the phosphotyrosine modification. Serine 468 bears the Phosphoserine mark. The PDZ-binding motif lies at threonine 497 to valine 499.

Belongs to the potassium channel family. A (Shaker) (TC 1.A.1.2) subfamily. Kv1.2/KCNA2 sub-subfamily. Homotetramer and heterotetramer with other channel-forming alpha subunits, such as KCNA1, KCNA4, KCNA5, KCNA6 and KCNA7. Channel activity is regulated by interaction with the beta subunits, including KCNAB1 and KCNAB2. Identified in a complex with KCNA1 and KCNAB2. Identified in a complex with KCNA5 and KCNAB1. Identified in a complex with KCNA4 and FYN. Interacts with the beta subunit KCNAB1. Interacts with PTK2B. Interacts (via C-terminus) with CTTN. Interacts (via N-terminal cytoplasmic domain) with RHOA (GTP-bound form); this regulates channel activity by reducing location at the cell surface in response to CHRM1 activation. Interacts with DRD2. Interacts with SIGMAR1; cocaine consumption leads to increased interaction. Interacts with ADAM22. Interacts (via C-terminus) with the PDZ domains of DLG1, DLG2 and DLG4. Interacts with CNTNAP2. Interacts with ADAM11. Interacts with LYNX1. In terms of processing, phosphorylated on tyrosine residues; phosphorylation increases in response to ischemia. Phosphorylated on tyrosine residues by activated PTK2B/PYK2. Phosphorylation on tyrosine residues suppresses ion channel activity. Phosphorylated on tyrosine residues in response to CHRM1 activation; this abolishes interaction with CTTN. This is probably due to endocytosis of the phosphorylated channel subunits. Phosphorylated on serine residues in response to increased cAMP levels; phosphorylation is apparently not catalyzed by PKA. Post-translationally, N-glycosylated, with complex, sialylated N-glycans. In terms of tissue distribution, detected in brain cortex. Detected in peroneal nerve in the juxtaparanodal regions of the node of Ranvier; expression is decreased in patients with diabetes mellitus that suffer from axonal neuropathy. Detected in paranodal and juxtanodal zones in myelinated spinal cord (at protein level).

The protein localises to the cell membrane. Its subcellular location is the membrane. It is found in the cell projection. It localises to the axon. The protein resides in the synapse. The protein localises to the endoplasmic reticulum membrane. Its subcellular location is the lamellipodium membrane. It is found in the synaptosome. It localises to the presynaptic cell membrane. The protein resides in the dendrite. The protein localises to the cell junction. Its subcellular location is the paranodal septate junction. The catalysed reaction is K(+)(in) = K(+)(out). Inhibited by 4-aminopyridine (4-AP) and charybdotoxin (CTX), but not by tetraethylammonium (TEA). Inhibited by dendrotoxin (DTX). Inhibited by tityustoxin-K alpha (TsTX-Kalpha), a toxin that is highly specific for KCNA2. Inhibited by maurotoxin. Inhibited by kappaM conotoxins kappaM-RIIIJ and kappaM-RIIIK; kappaM-RIIIJ has much higher affinity for channels containing KCNA2 than kappaM-RIIIK, with the exception of heterodimers formed by KCNA2 and KCNA7 where the opposite is true. Functionally, voltage-gated potassium channel that mediates transmembrane potassium transport in excitable membranes, primarily in the brain and the central nervous system, but also in the cardiovascular system. Prevents aberrant action potential firing and regulates neuronal output. Forms tetrameric potassium-selective channels through which potassium ions pass in accordance with their electrochemical gradient. The channel alternates between opened and closed conformations in response to the voltage difference across the membrane. Can form functional homotetrameric channels and heterotetrameric channels that contain variable proportions of KCNA1, KCNA2, KCNA4, KCNA5, KCNA6, KCNA7, and possibly other family members as well; channel properties depend on the type of alpha subunits that are part of the channel. Channel properties are modulated by cytoplasmic beta subunits that regulate the subcellular location of the alpha subunits and promote rapid inactivation of delayed rectifier potassium channels. In vivo, membranes probably contain a mixture of heteromeric potassium channel complexes, making it difficult to assign currents observed in intact tissues to any particular potassium channel family member. Homotetrameric KCNA2 forms a delayed-rectifier potassium channel that opens in response to membrane depolarization, followed by slow spontaneous channel closure. In contrast, a heteromultimer formed by KCNA2 and KCNA4 shows rapid inactivation. Regulates neuronal excitability and plays a role as pacemaker in the regulation of neuronal action potentials. KCNA2-containing channels play a presynaptic role and prevent hyperexcitability and aberrant action potential firing. Response to toxins that are selective for KCNA2-containing potassium channels suggests that in Purkinje cells, dendritic subthreshold KCNA2-containing potassium channels prevent random spontaneous calcium spikes, suppressing dendritic hyperexcitability without hindering the generation of somatic action potentials, and thereby play an important role in motor coordination. Plays a role in the induction of long-term potentiation of neuron excitability in the CA3 layer of the hippocampus. May function as down-stream effector for G protein-coupled receptors and inhibit GABAergic inputs to basolateral amygdala neurons. May contribute to the regulation of neurotransmitter release, such as gamma-aminobutyric acid (GABA). Contributes to the regulation of the axonal release of the neurotransmitter dopamine. Reduced KCNA2 expression plays a role in the perception of neuropathic pain after peripheral nerve injury, but not acute pain. Plays a role in the regulation of the time spent in non-rapid eye movement (NREM) sleep. In Homo sapiens (Human), this protein is Potassium voltage-gated channel subfamily A member 2 (KCNA2).